A 651-amino-acid chain; its full sequence is Acetyl-coenzyme A synthetase (651 aa).

CoA is bound by residues 190–193 (RRGK) and Thr-311. ATP contacts are provided by residues 387–389 (GEP), 411–416 (DTWWQT), Asp-508, and Arg-523. Ser-531 contacts CoA. Residue Arg-534 participates in ATP binding. Residues Val-545, His-547, and Val-550 each contribute to the Mg(2+) site. At Lys-617 the chain carries N6-acetyllysine.

The protein belongs to the ATP-dependent AMP-binding enzyme family. It depends on Mg(2+) as a cofactor. In terms of processing, acetylated. Deacetylation by the SIR2-homolog deacetylase activates the enzyme.

The catalysed reaction is acetate + ATP + CoA = acetyl-CoA + AMP + diphosphate. Catalyzes the conversion of acetate into acetyl-CoA (AcCoA), an essential intermediate at the junction of anabolic and catabolic pathways. AcsA undergoes a two-step reaction. In the first half reaction, AcsA combines acetate with ATP to form acetyl-adenylate (AcAMP) intermediate. In the second half reaction, it can then transfer the acetyl group from AcAMP to the sulfhydryl group of CoA, forming the product AcCoA. M.tuberculosis may use AcsA for both acetate and propionate assimilation. The polypeptide is Acetyl-coenzyme A synthetase (Mycobacterium tuberculosis (strain CDC 1551 / Oshkosh)).